A 424-amino-acid polypeptide reads, in one-letter code: Serine--tRNA ligase (424 aa).

Residue 231-233 coordinates L-serine; the sequence is TAE. ATP is bound by residues 262–264 and Val-278; that span reads RRE. Glu-285 is a binding site for L-serine. Residue 349–352 participates in ATP binding; sequence EVSS. Ser-384 is a binding site for L-serine.

It belongs to the class-II aminoacyl-tRNA synthetase family. Type-1 seryl-tRNA synthetase subfamily. Homodimer. The tRNA molecule binds across the dimer.

The protein localises to the cytoplasm. The catalysed reaction is tRNA(Ser) + L-serine + ATP = L-seryl-tRNA(Ser) + AMP + diphosphate + H(+). It catalyses the reaction tRNA(Sec) + L-serine + ATP = L-seryl-tRNA(Sec) + AMP + diphosphate + H(+). Its pathway is aminoacyl-tRNA biosynthesis; selenocysteinyl-tRNA(Sec) biosynthesis; L-seryl-tRNA(Sec) from L-serine and tRNA(Sec): step 1/1. Functionally, catalyzes the attachment of serine to tRNA(Ser). Is also able to aminoacylate tRNA(Sec) with serine, to form the misacylated tRNA L-seryl-tRNA(Sec), which will be further converted into selenocysteinyl-tRNA(Sec). The polypeptide is Serine--tRNA ligase (Chlamydia abortus (strain DSM 27085 / S26/3) (Chlamydophila abortus)).